Here is a 213-residue protein sequence, read N- to C-terminus: Large ribosomal subunit protein uL1 (213 aa).

This sequence belongs to the universal ribosomal protein uL1 family.

This Chlamydomonas reinhardtii (Chlamydomonas smithii) protein is Large ribosomal subunit protein uL1 (RPL10A).